Here is a 67-residue protein sequence, read N- to C-terminus: Large ribosomal subunit protein eL24 (67 aa).

4 residues coordinate Zn(2+): Cys-7, Cys-10, Cys-33, and Cys-37. The C4-type zinc finger occupies 7 to 37 (CSYCGKPFEPGTGKMFVRNDGRVLFFCSRKC).

This sequence belongs to the eukaryotic ribosomal protein eL24 family. As to quaternary structure, part of the 50S ribosomal subunit. Forms a cluster with proteins L3 and L14. Requires Zn(2+) as cofactor.

Binds to the 23S rRNA. This Pyrococcus abyssi (strain GE5 / Orsay) protein is Large ribosomal subunit protein eL24.